Here is a 316-residue protein sequence, read N- to C-terminus: Ribosomal RNA small subunit methyltransferase H (316 aa).

S-adenosyl-L-methionine is bound by residues 35-37 (SGH), D55, F84, D105, and Q112.

The protein belongs to the methyltransferase superfamily. RsmH family.

It localises to the cytoplasm. The enzyme catalyses cytidine(1402) in 16S rRNA + S-adenosyl-L-methionine = N(4)-methylcytidine(1402) in 16S rRNA + S-adenosyl-L-homocysteine + H(+). Specifically methylates the N4 position of cytidine in position 1402 (C1402) of 16S rRNA. This Streptococcus equi subsp. equi (strain 4047) protein is Ribosomal RNA small subunit methyltransferase H.